A 355-amino-acid chain; its full sequence is Histidinol-phosphate aminotransferase (355 aa).

Lys218 is subject to N6-(pyridoxal phosphate)lysine.

The protein belongs to the class-II pyridoxal-phosphate-dependent aminotransferase family. Histidinol-phosphate aminotransferase subfamily. Homodimer. Pyridoxal 5'-phosphate is required as a cofactor.

It catalyses the reaction L-histidinol phosphate + 2-oxoglutarate = 3-(imidazol-4-yl)-2-oxopropyl phosphate + L-glutamate. Its pathway is amino-acid biosynthesis; L-histidine biosynthesis; L-histidine from 5-phospho-alpha-D-ribose 1-diphosphate: step 7/9. This Chlorobaculum parvum (strain DSM 263 / NCIMB 8327) (Chlorobium vibrioforme subsp. thiosulfatophilum) protein is Histidinol-phosphate aminotransferase.